The following is a 295-amino-acid chain: Protoheme IX farnesyltransferase (295 aa).

9 helical membrane-spanning segments follow: residues 8–28, 35–55, 84–104, 107–127, 132–152, 162–182, 208–228, 233–253, and 264–284; these read VTKP…FLLA, YPLF…GCVF, ASLV…WFGA, LACW…SLYM, VYGT…GYCA, AILL…IAIF, ITLY…GGYA, LVVA…GYKV, and FVFS…DFMV.

Belongs to the UbiA prenyltransferase family. Protoheme IX farnesyltransferase subfamily.

It localises to the cell inner membrane. It carries out the reaction heme b + (2E,6E)-farnesyl diphosphate + H2O = Fe(II)-heme o + diphosphate. It functions in the pathway porphyrin-containing compound metabolism; heme O biosynthesis; heme O from protoheme: step 1/1. Functionally, converts heme B (protoheme IX) to heme O by substitution of the vinyl group on carbon 2 of heme B porphyrin ring with a hydroxyethyl farnesyl side group. This Klebsiella pneumoniae subsp. pneumoniae (strain ATCC 700721 / MGH 78578) protein is Protoheme IX farnesyltransferase.